The sequence spans 382 residues: Anhydro-N-acetylmuramic acid kinase (382 aa).

Residue 9–16 (GTSLDGID) coordinates ATP.

This sequence belongs to the anhydro-N-acetylmuramic acid kinase family.

It carries out the reaction 1,6-anhydro-N-acetyl-beta-muramate + ATP + H2O = N-acetyl-D-muramate 6-phosphate + ADP + H(+). It functions in the pathway amino-sugar metabolism; 1,6-anhydro-N-acetylmuramate degradation. Its pathway is cell wall biogenesis; peptidoglycan recycling. Catalyzes the specific phosphorylation of 1,6-anhydro-N-acetylmuramic acid (anhMurNAc) with the simultaneous cleavage of the 1,6-anhydro ring, generating MurNAc-6-P. Is required for the utilization of anhMurNAc either imported from the medium or derived from its own cell wall murein, and thus plays a role in cell wall recycling. In Bacillus thuringiensis subsp. konkukian (strain 97-27), this protein is Anhydro-N-acetylmuramic acid kinase.